The following is a 450-amino-acid chain: Tubulin alpha-6 chain (450 aa).

GTP-binding residues include Gln11, Glu71, Gly144, Thr145, Thr179, Asn206, and Asn228. Residue Glu71 coordinates Mg(2+). The active site involves Glu254. Thr349 is modified (phosphothreonine). The tract at residues 430–450 (KDYEEVGAEGGDDEDDEGEEY) is disordered. The span at 431–450 (DYEEVGAEGGDDEDDEGEEY) shows a compositional bias: acidic residues.

Belongs to the tubulin family. As to quaternary structure, dimer of alpha and beta chains. A typical microtubule is a hollow water-filled tube with an outer diameter of 25 nm and an inner diameter of 15 nM. Alpha-beta heterodimers associate head-to-tail to form protofilaments running lengthwise along the microtubule wall with the beta-tubulin subunit facing the microtubule plus end conferring a structural polarity. Microtubules usually have 13 protofilaments but different protofilament numbers can be found in some organisms and specialized cells. Interacts with TFCB. The cofactor is Mg(2+). Post-translationally, undergoes a tyrosination/detyrosination cycle, the cyclic removal and re-addition of a C-terminal tyrosine residue by the enzymes tubulin tyrosine carboxypeptidase (TTCP) and tubulin tyrosine ligase (TTL), respectively. In terms of processing, acetylation of alpha chains at Lys-40 stabilizes microtubules and affects affinity and processivity of microtubule motors. This modification has a role in multiple cellular functions, ranging from cell motility, cell cycle progression or cell differentiation to intracellular trafficking and signaling.

It is found in the cytoplasm. Its subcellular location is the cytoskeleton. The catalysed reaction is GTP + H2O = GDP + phosphate + H(+). Functionally, tubulin is the major constituent of microtubules, a cylinder consisting of laterally associated linear protofilaments composed of alpha- and beta-tubulin heterodimers. Microtubules grow by the addition of GTP-tubulin dimers to the microtubule end, where a stabilizing cap forms. Below the cap, tubulin dimers are in GDP-bound state, owing to GTPase activity of alpha-tubulin. The polypeptide is Tubulin alpha-6 chain (TUBA6) (Arabidopsis thaliana (Mouse-ear cress)).